The following is a 240-amino-acid chain: Phosphatidylserine decarboxylase proenzyme (240 aa).

The active-site Schiff-base intermediate with substrate; via pyruvic acid is the Ser205. A Pyruvic acid (Ser); by autocatalysis modification is found at Ser205.

Belongs to the phosphatidylserine decarboxylase family. PSD-A subfamily. In terms of assembly, heterodimer of a large membrane-associated beta subunit and a small pyruvoyl-containing alpha subunit. Pyruvate serves as cofactor. Post-translationally, is synthesized initially as an inactive proenzyme. Formation of the active enzyme involves a self-maturation process in which the active site pyruvoyl group is generated from an internal serine residue via an autocatalytic post-translational modification. Two non-identical subunits are generated from the proenzyme in this reaction, and the pyruvate is formed at the N-terminus of the alpha chain, which is derived from the carboxyl end of the proenzyme. The post-translation cleavage follows an unusual pathway, termed non-hydrolytic serinolysis, in which the side chain hydroxyl group of the serine supplies its oxygen atom to form the C-terminus of the beta chain, while the remainder of the serine residue undergoes an oxidative deamination to produce ammonia and the pyruvoyl prosthetic group on the alpha chain.

The protein resides in the cell membrane. The enzyme catalyses a 1,2-diacyl-sn-glycero-3-phospho-L-serine + H(+) = a 1,2-diacyl-sn-glycero-3-phosphoethanolamine + CO2. The protein operates within phospholipid metabolism; phosphatidylethanolamine biosynthesis; phosphatidylethanolamine from CDP-diacylglycerol: step 2/2. Catalyzes the formation of phosphatidylethanolamine (PtdEtn) from phosphatidylserine (PtdSer). This Rhodopirellula baltica (strain DSM 10527 / NCIMB 13988 / SH1) protein is Phosphatidylserine decarboxylase proenzyme.